A 597-amino-acid polypeptide reads, in one-letter code: Sulfite reductase [NADPH] flavoprotein alpha-component (597 aa).

The region spanning 62 to 200 is the Flavodoxin-like domain; it reads VTVLSASQTG…TADKWIQDVV (139 aa). FMN is bound by residues 68-73, 115-118, and 151-160; these read SQTGNA, STQG, and LGDTSYPNFC. Residues 232 to 446 form the FAD-binding FR-type domain; that stretch reads ENPYTAKLIT…VEPNDNFRLP (215 aa). Residues threonine 320, asparagine 354, 384–387, 402–404, and 417–420 each bind FAD; these read RLYS, SVG, and GVAS. Residues 517 to 518, 523 to 527, and aspartate 559 each bind NADP(+); these read SR and KIYVQ. Tyrosine 597 is an FAD binding site.

This sequence belongs to the NADPH-dependent sulphite reductase flavoprotein subunit CysJ family. In the N-terminal section; belongs to the flavodoxin family. The protein in the C-terminal section; belongs to the flavoprotein pyridine nucleotide cytochrome reductase family. Alpha(8)-beta(8). The alpha component is a flavoprotein, the beta component is a hemoprotein. FAD is required as a cofactor. FMN serves as cofactor.

It catalyses the reaction hydrogen sulfide + 3 NADP(+) + 3 H2O = sulfite + 3 NADPH + 4 H(+). Its pathway is sulfur metabolism; hydrogen sulfide biosynthesis; hydrogen sulfide from sulfite (NADPH route): step 1/1. Component of the sulfite reductase complex that catalyzes the 6-electron reduction of sulfite to sulfide. This is one of several activities required for the biosynthesis of L-cysteine from sulfate. The flavoprotein component catalyzes the electron flow from NADPH -&gt; FAD -&gt; FMN to the hemoprotein component. This Mannheimia succiniciproducens (strain KCTC 0769BP / MBEL55E) protein is Sulfite reductase [NADPH] flavoprotein alpha-component.